A 404-amino-acid chain; its full sequence is MANIVVKKLERTPIDETPVEIVERKGIGHPDSICDGIAESVSVALCKMYKEKLGVVLHHNTDQVELVGGYAYPKLGGGCMINPIYVLLSGRATAEVLDKETGKIVKLPVNTTAVNAAREYLKKALRNIDLEKDVVVDCRIGQGSVDLVEVFDRKRSEIPHANDTSFGVGHAPLSTTEKIVLETEKLLNSAELKAIVPGVGEDIKVMGLREGKKITLTIAMAVVDKYADSLEEYEKVKEMAHKKVVENAQKYLNGHELEVFINTADDEECIFLTVTGTSAEMGDDGSVGRGNRANGLITPFRPMSMEATSGKNPINHIGKIYNILSNIIASDVAELEEVKECQIRILSQIGKPITEPKILSIEVIPENGFTLDDVTKKATEVAEKWLDNIQNVTEKIVEGKVTTF.

ATP is bound at residue 141–146; the sequence is GQGSVD.

The protein belongs to the AdoMet synthase 2 family. It depends on Mg(2+) as a cofactor.

The catalysed reaction is L-methionine + ATP + H2O = S-adenosyl-L-methionine + phosphate + diphosphate. Its pathway is amino-acid biosynthesis; S-adenosyl-L-methionine biosynthesis; S-adenosyl-L-methionine from L-methionine: step 1/1. In terms of biological role, catalyzes the formation of S-adenosylmethionine from methionine and ATP. This Methanococcus vannielii (strain ATCC 35089 / DSM 1224 / JCM 13029 / OCM 148 / SB) protein is S-adenosylmethionine synthase.